A 209-amino-acid chain; its full sequence is Protein GrpE (209 aa).

Residues 1-18 are compositionally biased toward basic and acidic residues; that stretch reads MKIFNKDGNKNSKEDTKA. The interval 1–60 is disordered; that stretch reads MKIFNKDGNKNSKEDTKAGAENSEAQNSGSSAEEVNKARENPEEASASSEAEKSPEVKCQ. The span at 23–33 shows a compositional bias: polar residues; it reads SEAQNSGSSAE. Residues 50-60 are compositionally biased toward basic and acidic residues; sequence EAEKSPEVKCQ.

The protein belongs to the GrpE family. In terms of assembly, homodimer.

It localises to the cytoplasm. Functionally, participates actively in the response to hyperosmotic and heat shock by preventing the aggregation of stress-denatured proteins, in association with DnaK and GrpE. It is the nucleotide exchange factor for DnaK and may function as a thermosensor. Unfolded proteins bind initially to DnaJ; upon interaction with the DnaJ-bound protein, DnaK hydrolyzes its bound ATP, resulting in the formation of a stable complex. GrpE releases ADP from DnaK; ATP binding to DnaK triggers the release of the substrate protein, thus completing the reaction cycle. Several rounds of ATP-dependent interactions between DnaJ, DnaK and GrpE are required for fully efficient folding. The chain is Protein GrpE from Methanosarcina barkeri (strain Fusaro / DSM 804).